The sequence spans 382 residues: Alkanesulfonate monooxygenase (382 aa).

This sequence belongs to the SsuD family. Homotetramer.

It carries out the reaction an alkanesulfonate + FMNH2 + O2 = an aldehyde + FMN + sulfite + H2O + 2 H(+). Catalyzes the desulfonation of aliphatic sulfonates. In Buttiauxella sp. (strain PNBS), this protein is Alkanesulfonate monooxygenase.